The primary structure comprises 503 residues: Trehalose-6-phosphate synthase (503 aa).

Arg-22 is a binding site for D-glucose 6-phosphate. UDP-alpha-D-glucose is bound at residue 42–43 (GG). 2 residues coordinate D-glucose 6-phosphate: Tyr-94 and Asp-148. Residues Arg-290 and Lys-295 each contribute to the UDP-alpha-D-glucose site. Arg-328 contacts D-glucose 6-phosphate. 393-397 (LVAKE) contributes to the UDP-alpha-D-glucose binding site. The tract at residues 481–503 (GETGDSGVTGESTPAPESDSGSF) is disordered.

It belongs to the glycosyltransferase 20 family. As to quaternary structure, homotetramer.

The catalysed reaction is ADP-alpha-D-glucose + D-glucose 6-phosphate = alpha,alpha-trehalose 6-phosphate + ADP + H(+). It carries out the reaction CDP-alpha-D-glucose + D-glucose 6-phosphate = alpha,alpha-trehalose 6-phosphate + CDP + H(+). It catalyses the reaction GDP-alpha-D-glucose + D-glucose 6-phosphate = alpha,alpha-trehalose 6-phosphate + GDP + H(+). The enzyme catalyses TDP-alpha-D-glucose + D-glucose 6-phosphate = 5-methyl-UDP + alpha,alpha-trehalose 6-phosphate + H(+). The catalysed reaction is D-glucose 6-phosphate + UDP-alpha-D-glucose = alpha,alpha-trehalose 6-phosphate + UDP + H(+). The protein operates within glycan biosynthesis; trehalose biosynthesis. With respect to regulation, stimulated by the polynucleotide FII (physiological activator), and by chondroitin sulfate (CS) and heparin. Activation by the polyanion is inhibited by high salt concentration as well as by high concentrations of mononucleoside phosphates. Functionally, involved in the production of glycogen and alpha-glucan via the TreS-Pep2 branch involved in the biosynthesis of maltose-1-phosphate (M1P), and probably in the osmoprotection via the biosynthesis of trehalose. Catalyzes the transfer of glucose from UDP-glucose (UDP-Glc) to glucose-6-phosphate (Glc-6-P) to form trehalose-6-phosphate. ADP-Glc, CDP-Glc, GDP-Glc and TDP-Glc are also glucosyl donors, however, when the pyrimidine sugar nucleotides (CDP-Glc, TDP-Glc and UDP-Glc) are used as substrates, there is an absolute requirement for a high molecular weight polyanion for activity. The polypeptide is Trehalose-6-phosphate synthase (Mycolicibacterium smegmatis (strain ATCC 700084 / mc(2)155) (Mycobacterium smegmatis)).